A 343-amino-acid polypeptide reads, in one-letter code: 2-alkenal reductase (NADP(+)-dependent) (343 aa).

Tyr55 and Tyr80 together coordinate substrate. NADP(+) is bound by residues 165-166 (AV), Gly186, Lys190, Tyr206, Asn230, Cys252, Tyr258, 282-284 (FLV), and Asn332.

Belongs to the NADP-dependent oxidoreductase L4BD family. Homodimer.

It catalyses the reaction an n-alkanal + NADP(+) = an alk-2-enal + NADPH + H(+). Functionally, reduces the C=C double bonds of alpha, beta unsaturated enones, but has no activity on enones with an endocyclic C=C double-bond. Shows a high specificity for NADPH as the hybrid donor. Substrates are 1-nitrocyclohexene, 2-methylpentenal, trans-cinnamaldehyde, methyl-trans-2-methylcinnamaldehyde, trans-2-nonenal and 1-octen-3-one. Reduced activity with aplha-methyl transcinnamaldehyde, 1-cyclohexene-1-carboxaldehyde, methyl crotonate, (R)-pulegone, and dimethyl itaconate and no activity with maleimides, citral, (5R)- or (5S)-carvone, (S)-perillyl alcohol, and substituted cyclohexenones and cyclopentenones. May also act as a allyl-alcohol dehydrogenase by catalyzing the dehydrogenation of secondary allylic alcohols rather than saturated secondary alcohols. Allyl-alcohol dehydrogenase is specific for the S-stereoisomer of the alcohols. The protein is 2-alkenal reductase (NADP(+)-dependent) (DBR) of Nicotiana tabacum (Common tobacco).